A 1396-amino-acid polypeptide reads, in one-letter code: DNA-directed RNA polymerase subunit beta' (1396 aa).

Positions 72, 74, 87, and 90 each coordinate Zn(2+). Residues aspartate 463, aspartate 465, and aspartate 467 each contribute to the Mg(2+) site. Cysteine 814, cysteine 889, cysteine 896, and cysteine 899 together coordinate Zn(2+).

This sequence belongs to the RNA polymerase beta' chain family. The RNAP catalytic core consists of 2 alpha, 1 beta, 1 beta' and 1 omega subunit. When a sigma factor is associated with the core the holoenzyme is formed, which can initiate transcription. Mg(2+) is required as a cofactor. Requires Zn(2+) as cofactor.

It catalyses the reaction RNA(n) + a ribonucleoside 5'-triphosphate = RNA(n+1) + diphosphate. Functionally, DNA-dependent RNA polymerase catalyzes the transcription of DNA into RNA using the four ribonucleoside triphosphates as substrates. This chain is DNA-directed RNA polymerase subunit beta', found in Chlamydia trachomatis serovar L2b (strain UCH-1/proctitis).